The chain runs to 155 residues: MGPKLLESRLCLLLLLGLVLMLASCQAQILSQKFYTQHIYNSTYPRCDAVMRVVNRYRPRCKDINTFLHTSFADVVAVCGHPNITCNNLTRKNCHASSFQVFITFCNLTMPTRICTQCRYQTTGSVKYYRVACENRTPQDTPMYPVVPVHLDGTF.

A signal peptide spans 1–25; that stretch reads MGPKLLESRLCLLLLLGLVLMLASC. Lys-33 serves as a coordination point for substrate. The Proton acceptor role is filled by His-38. N-linked (GlcNAc...) asparagine glycosylation occurs at Asn-41. 4 disulfide bridges follow: Cys-47–Cys-106, Cys-61–Cys-118, Cys-79–Cys-133, and Cys-86–Cys-94. The residue at position 57 (Tyr-57) is a 3'-nitrotyrosine. 62-66 serves as a coordination point for substrate; the sequence is KDINT. Residues Asn-83, Asn-88, and Asn-107 are each glycosylated (N-linked (GlcNAc...) asparagine). His-150 (proton donor) is an active-site residue.

The protein belongs to the pancreatic ribonuclease family. Interacts with and forms a tight 1:1 complex with RNH1. Dimerization of two such complexes may occur.

It is found in the lysosome. The protein resides in the cytoplasmic granule. It catalyses the reaction an [RNA] containing cytidine + H2O = an [RNA]-3'-cytidine-3'-phosphate + a 5'-hydroxy-ribonucleotide-3'-[RNA].. The catalysed reaction is an [RNA] containing uridine + H2O = an [RNA]-3'-uridine-3'-phosphate + a 5'-hydroxy-ribonucleotide-3'-[RNA].. Its function is as follows. This is a non-secretory ribonuclease. It is a pyrimidine specific nuclease with a slight preference for U. Cytotoxin and helminthotoxin. Possesses a wide variety of biological activities. This is Non-secretory ribonuclease (Rnase2) from Mus musculus (Mouse).